A 120-amino-acid chain; its full sequence is Fumarate reductase subunit D (120 aa).

Transmembrane regions (helical) follow at residues 25–45, 55–75, and 100–120; these read FAML…LGVI, VAGF…ISMP, and IACY…IFMI.

The protein belongs to the FrdD family. As to quaternary structure, part of an enzyme complex containing four subunits: a flavoprotein (FrdA), an iron-sulfur protein (FrdB), and two hydrophobic anchor proteins (FrdC and FrdD).

The protein localises to the cell inner membrane. Its function is as follows. Anchors the catalytic components of the fumarate reductase complex to the cell membrane, binds quinones. This chain is Fumarate reductase subunit D, found in Aliivibrio fischeri (strain MJ11) (Vibrio fischeri).